Here is a 127-residue protein sequence, read N- to C-terminus: Large ribosomal subunit protein bL20 (127 aa).

It belongs to the bacterial ribosomal protein bL20 family.

Functionally, binds directly to 23S ribosomal RNA and is necessary for the in vitro assembly process of the 50S ribosomal subunit. It is not involved in the protein synthesizing functions of that subunit. The polypeptide is Large ribosomal subunit protein bL20 (Renibacterium salmoninarum (strain ATCC 33209 / DSM 20767 / JCM 11484 / NBRC 15589 / NCIMB 2235)).